Here is a 510-residue protein sequence, read N- to C-terminus: MKIEKSQRNLEIDRSRKNDFLYPLIFREYIYTFAHDRDLNRSILLENVGYDNKYSLLIVKRLITRMYQQNHLIISANDSNQNTFFRYNKNLYFQMISEGFAVIVEIPFSLRLVSSLESSEIVKSHNLRSIHSIFPFLEGKFPHLNYLSEGLIPYPIHLEKLVQILRYWVKDPSSLHLLRLFLHEYWNLNSLIIPKKSISFFVKKNQRFFLFLYNSHVYEYESVFFFLCKQSFHFRLTFYQVFLERIYFYGKIEHFVEVFTKDWGDSLCLLKDPFIHYIRYQGKSIFVSKDTPLLMKKWKYYLVNLCQCHFDVCFQPQKIHINPFSLYKHSFALLGYLSSSSVRLNLSVVRSQMLENAFLMDNIMNKLDTTVSIIPLIGSLAKMKFCNAVGHPISKPTWADFSDSDIIDRFVRICRNLSHYYSGSSRKKSLYRIKYILRLSCVKTLARKHKSTVRIFLKRLGSELLEEFFTEEEQILFLIFPRASSISQKLYRGRVWYLDIICINELSNHE.

Belongs to the intron maturase 2 family. MatK subfamily.

The protein resides in the plastid. Its subcellular location is the chloroplast. Usually encoded in the trnK tRNA gene intron. Probably assists in splicing its own and other chloroplast group II introns. This chain is Maturase K, found in Populus trichocarpa (Western balsam poplar).